The sequence spans 364 residues: Tyrosine--tRNA ligase (364 aa).

Tyrosine 39 contributes to the L-tyrosine binding site. Residues histidine 49 and tryptophan 52 each contribute to the ATP site. L-tyrosine-binding residues include tyrosine 165, glutamine 169, aspartate 172, and glutamine 187. Positions 238 to 242 (KMSKS) match the 'KMSKS' region motif. Position 241 (lysine 241) interacts with ATP.

It belongs to the class-I aminoacyl-tRNA synthetase family. TyrS type 4 subfamily. Homodimer.

The protein localises to the cytoplasm. It catalyses the reaction tRNA(Tyr) + L-tyrosine + ATP = L-tyrosyl-tRNA(Tyr) + AMP + diphosphate + H(+). Catalyzes the attachment of tyrosine to tRNA(Tyr) in a two-step reaction: tyrosine is first activated by ATP to form Tyr-AMP and then transferred to the acceptor end of tRNA(Tyr). The polypeptide is Tyrosine--tRNA ligase (Aeropyrum pernix (strain ATCC 700893 / DSM 11879 / JCM 9820 / NBRC 100138 / K1)).